Reading from the N-terminus, the 777-residue chain is Zinc finger FYVE domain-containing protein 1 (777 aa).

Positions 416 to 777 are required for localization in the lipid droplets; sequence MAHSSFFPDE…FNCNKKPGDL (362 aa). 2 consecutive FYVE-type zinc fingers follow at residues 598–659 and 715–775; these read NSQI…EARN and DHEI…KKPG. Residues cysteine 604, cysteine 607, cysteine 620, cysteine 623, cysteine 628, cysteine 631, cysteine 651, cysteine 654, cysteine 721, cysteine 724, cysteine 737, cysteine 740, cysteine 745, cysteine 748, cysteine 767, and cysteine 770 each contribute to the Zn(2+) site.

Interacts with RAB18 (in GTP-bound form). Interacts with BSCL2 in a RAB18-dependent manner. Interacts with ZW10. In terms of assembly, (Microbial infection) Interacts with SARS coronavirus-2/SARS-CoV-2 non-structural protein 6 (nsp6); the interaction is independent of PtdIns3P-binding and leads to endoplasmic reticulum (ER) and double membrane vesicles (DMVs) binding to lipid droplets. In terms of tissue distribution, highly expressed in heart. Also detected in the testis. Expressed in all tissues examined, including, brain, placenta, lung, liver, skeletal muscle, pancreas and kidney. Highly expressed in heart.

Its subcellular location is the golgi apparatus. The protein localises to the golgi stack. It localises to the endoplasmic reticulum. It is found in the lipid droplet. The protein resides in the preautophagosomal structure. Its subcellular location is the mitochondrion. In terms of biological role, plays a role in the formation of lipid droplets (LDs) which are storage organelles at the center of lipid and energy homeostasis. Regulates the morphology, size and distribution of LDs. Mediates the formation of endoplasmic reticulum-lipid droplets (ER-LD) contacts by forming a complex with RAB18 and ZW10. Binds to phosphatidylinositol 3-phosphate (PtdIns3P) through FYVE-type zinc finger. (Microbial infection) Upon SARS coronavirus-2/SARS-CoV-2 infection, mediates through binding with non-structural protein 6 (nsp6) the replication organelle-lipid droplet association required to sustain viral replication. The sequence is that of Zinc finger FYVE domain-containing protein 1 (ZFYVE1) from Homo sapiens (Human).